The following is a 131-amino-acid chain: Profilin-4 (131 aa).

Cysteines 13 and 115 form a disulfide. The Involved in PIP2 interaction signature appears at 81–97; it reads VVIRGKKGTGGITIKKT. Threonine 111 bears the Phosphothreonine mark.

It belongs to the profilin family. In terms of assembly, occurs in many kinds of cells as a complex with monomeric actin in a 1:1 ratio. In terms of processing, phosphorylated by MAP kinases. Expressed predominantly in endosperm but is also found at low levels in all tissues examined, including mature and germinated pollen.

Its subcellular location is the cytoplasm. The protein resides in the cytoskeleton. Functionally, binds to actin and affects the structure of the cytoskeleton. At high concentrations, profilin prevents the polymerization of actin, whereas it enhances it at low concentrations. By binding to PIP2, it inhibits the formation of IP3 and DG. Has a high affinity for poly-proline. The chain is Profilin-4 (PRO4) from Zea mays (Maize).